The following is a 573-amino-acid chain: Urease subunit alpha (573 aa).

One can recognise a Urease domain in the interval 136-573 (GAIDCHVHLI…LPMAQRYFLF (438 aa)). Ni(2+) is bound by residues His141, His143, and Lys224. An N6-carboxylysine modification is found at Lys224. A substrate-binding site is contributed by His226. Residues His253 and His279 each coordinate Ni(2+). His327 serves as the catalytic Proton donor. Ni(2+) is bound at residue Asp367.

The protein belongs to the metallo-dependent hydrolases superfamily. Urease alpha subunit family. In terms of assembly, heterotrimer of UreA (gamma), UreB (beta) and UreC (alpha) subunits. Three heterotrimers associate to form the active enzyme. Requires Ni cation as cofactor. Carboxylation allows a single lysine to coordinate two nickel ions.

It is found in the cytoplasm. It catalyses the reaction urea + 2 H2O + H(+) = hydrogencarbonate + 2 NH4(+). The protein operates within nitrogen metabolism; urea degradation; CO(2) and NH(3) from urea (urease route): step 1/1. In Mycolicibacterium vanbaalenii (strain DSM 7251 / JCM 13017 / BCRC 16820 / KCTC 9966 / NRRL B-24157 / PYR-1) (Mycobacterium vanbaalenii), this protein is Urease subunit alpha.